Consider the following 400-residue polypeptide: Na(+)/H(+) antiporter NhaA (400 aa).

Helical transmembrane passes span 18 to 38 (LATEAAGGVLLMFTAALAIII), 68 to 88 (VHMWINDGLMAIFFLLVGLEI), 105 to 125 (LPALPALMGMAVPALIYLAVS), 133 to 153 (GGWAIPAATDIAFAVGALALL), 163 to 183 (VMLVSVAIIDDMGAVAIIAVF), 186 to 206 (SSINLLALAGAAGIVAVLLAF), 211 to 231 (VVALWPYLIGVAALWYVTLLS), 232 to 252 (GVHATIAGVVGALLIPYSAGS), 267 to 287 (GLAPWVGFLIVPAFGFANAGV), 305 to 325 (IALGLLLGKQLGVFAGVLLAV), 338 to 358 (WLQIYGVAMLCGIGFTMSLFI), and 372 to 392 (AAKIGILLGSLLSAVIACVIL).

Belongs to the NhaA Na(+)/H(+) (TC 2.A.33) antiporter family.

The protein resides in the cell inner membrane. The enzyme catalyses Na(+)(in) + 2 H(+)(out) = Na(+)(out) + 2 H(+)(in). Its function is as follows. Na(+)/H(+) antiporter that extrudes sodium in exchange for external protons. The chain is Na(+)/H(+) antiporter NhaA from Pseudomonas entomophila (strain L48).